Consider the following 122-residue polypeptide: Spermidine export protein MdtJ (122 aa).

4 helical membrane-spanning segments follow: residues 1–21 (MIYW…TLSM), 31–51 (TGHI…SMAV), 54–74 (VALG…ITLF), and 81–101 (EPIS…IMLV).

Belongs to the drug/metabolite transporter (DMT) superfamily. Small multidrug resistance (SMR) (TC 2.A.7.1) family. MdtJ subfamily. As to quaternary structure, forms a complex with MdtI.

It localises to the cell inner membrane. Functionally, catalyzes the excretion of spermidine. In Serratia proteamaculans (strain 568), this protein is Spermidine export protein MdtJ.